Reading from the N-terminus, the 1013-residue chain is Sodium/potassium-transporting ATPase subunit alpha-3 (1013 aa).

Positions 1 to 10 (MGDKKDDKSS) are enriched in basic and acidic residues. Positions 1–24 (MGDKKDDKSSPKKSKAKERRDLDD) are disordered. Topologically, residues 1 to 77 (MGDKKDDKSS…NALTPPPTTP (77 aa)) are cytoplasmic. Phosphoserine is present on residues Ser-37 and Ser-56. An interaction with phosphoinositide-3 kinase region spans residues 72-74 (PPP). Residues 78–98 (EWVKFCRQLFGGFSILLWIGA) form a helical membrane-spanning segment. The Extracellular portion of the chain corresponds to 99–121 (ILCFLAYGIQAGTEDDPSGDNLY). Residues 122–142 (LGIVLAAVVIITGCFSYYQEA) traverse the membrane as a helical segment. Residues 143–278 (KSSKIMESFK…VGKTPIAIEI (136 aa)) lie on the Cytoplasmic side of the membrane. 2 positions are modified to phosphoserine: Ser-218 and Ser-265. Residues 279-298 (EHFIQLITGVAVFLGVSFFI) traverse the membrane as a helical segment. At 299-310 (LSLILGYTWLEA) the chain is on the extracellular side. The helical transmembrane segment at 311-328 (VIFLIGIIVANVPEGLLA) threads the bilayer. The Cytoplasmic portion of the chain corresponds to 329–762 (TVTVCLTLTA…EEGRLIFDNL (434 aa)). The 4-aspartylphosphate intermediate role is filled by Asp-366. Ser-442 is modified (phosphoserine). Residue Tyr-548 is modified to Phosphotyrosine. 2 residues coordinate Mg(2+): Asp-707 and Asp-711. A helical membrane pass occupies residues 763–782 (KKSIAYTLTSNIPEITPFLL). Over 783–792 (FIMANIPLPL) the chain is Extracellular. Residues 793–813 (GTITILCIDLGTDMVPAISLA) form a helical membrane-spanning segment. The Cytoplasmic segment spans residues 814–833 (YEAAESDIMKRQPRNPRTDK). Residues 834-856 (LVNERLISMAYGQIGMIQALGGF) traverse the membrane as a helical segment. At 857–908 (FSYFVILAENGFLPGNLVGIRLNWDDRTVNDLEDSYGQQWTYEQRKVVEFTC) the chain is on the extracellular side. A helical membrane pass occupies residues 909 to 928 (HTAFFVSIVVVQWADLIICK). The Cytoplasmic segment spans residues 929–941 (TRRNSVFQQGMKN). Ser-933 is subject to Phosphoserine; by PKA. A helical transmembrane segment spans residues 942 to 960 (KILIFGLFEETALAAFLSY). Residues 961–975 (CPGMDVALRMYPLKP) lie on the Extracellular side of the membrane. The helical transmembrane segment at 976–996 (SWWFCAFPYSFLIFVYDEIRK) threads the bilayer. Residues 997-1013 (LILRRNPGGWVEKETYY) lie on the Cytoplasmic side of the membrane.

This sequence belongs to the cation transport ATPase (P-type) (TC 3.A.3) family. Type IIC subfamily. The sodium/potassium-transporting ATPase is composed of a catalytic alpha subunit, an auxiliary non-catalytic beta subunit and an additional regulatory subunit. Interacts with regulatory subunit FXYD1.

The protein resides in the cell membrane. The catalysed reaction is K(+)(out) + Na(+)(in) + ATP + H2O = K(+)(in) + Na(+)(out) + ADP + phosphate + H(+). This is the catalytic component of the active enzyme, which catalyzes the hydrolysis of ATP coupled with the exchange of sodium and potassium ions across the plasma membrane. This action creates the electrochemical gradient of sodium and potassium ions, providing the energy for active transport of various nutrients. This is Sodium/potassium-transporting ATPase subunit alpha-3 (Atp1a3) from Mus musculus (Mouse).